Here is a 293-residue protein sequence, read N- to C-terminus: AM-toxin biosynthesis protein 14 (293 aa).

5 helical membrane passes run serine 33–isoleucine 53, isoleucine 73–leucine 93, glycine 148–tryptophan 168, leucine 183–leucine 203, and valine 221–threonine 241.

It is found in the membrane. Its pathway is mycotoxin biosynthesis. Its function is as follows. Part of the gene clusters that mediate the biosynthesis of AM-toxins, host-selective toxins (HSTs) causing Alternaria blotch on apple, a worldwide distributed disease. AM-toxins are cyclic depsipeptides containing the 3 residues 2-hydroxy-isovaleric acid (2-HIV), dehydroalanine, L-alanine which are common for all 3 AM-toxins I to III. The fourth precursor is L-alpha-amino-methoxyphenyl-valeric acid (L-Amv) for AM-toxin I, L-alpha-amino-phenyl-valeric acid (L-Apv) for AM-toxin II, and L-alpha-amino-hydroxyphenyl-valeric acid (L-Ahv) for AM-toxin III. AM-toxins have two target sites for affecting susceptible apple cells; they cause invagination of the plasma membrane and electrolyte loss and chloroplast disorganization. The non-ribosomal peptide synthetase AMT1 contains 4 catalytic modules and is responsible for activation of each residue in AM-toxin. The aldo-keto reductase AMT2 catalyzes the conversion of 2-keto-isovaleric acid (2-KIV) to 2-hydroxy-isovaleric acid (2-HIV), one of the precursor residues incorporated by AMT1 during AM-toxin biosynthesis, by reduction of its ketone to an alcohol. The cytochrome P450 monooxygenase AMT3 and the thioesterase AMT4 are also important for AM-toxin production, but their exact function within the AM-toxin biosynthesis are not known yet. Up to 21 proteins (including AMT1 to AMT4) are predicted to be involved in AM-toxin biosynthesis since their expression ishighly up-regulated in AM-toxin-producing cultures. This Alternaria alternata (Alternaria rot fungus) protein is AM-toxin biosynthesis protein 14.